A 304-amino-acid polypeptide reads, in one-letter code: Coenzyme PQQ synthesis protein B (304 aa).

This sequence belongs to the PqqB family.

It functions in the pathway cofactor biosynthesis; pyrroloquinoline quinone biosynthesis. Its function is as follows. May be involved in the transport of PQQ or its precursor to the periplasm. This chain is Coenzyme PQQ synthesis protein B, found in Pseudomonas paraeruginosa (strain DSM 24068 / PA7) (Pseudomonas aeruginosa (strain PA7)).